Here is a 182-residue protein sequence, read N- to C-terminus: Large ribosomal subunit protein uL10 (182 aa).

Belongs to the universal ribosomal protein uL10 family. Part of the ribosomal stalk of the 50S ribosomal subunit. The N-terminus interacts with L11 and the large rRNA to form the base of the stalk. The C-terminus forms an elongated spine to which L12 dimers bind in a sequential fashion forming a multimeric L10(L12)X complex.

Its function is as follows. Forms part of the ribosomal stalk, playing a central role in the interaction of the ribosome with GTP-bound translation factors. This is Large ribosomal subunit protein uL10 from Microcystis aeruginosa (strain NIES-843 / IAM M-2473).